Here is a 230-residue protein sequence, read N- to C-terminus: MQQACIAIIIILLTVAAYLAMVKLYKRFPLPFLIPVLTTTILIVAALMMFHVSYEGYMIGGKWINSLLGPAVVALAYPLYKQWHIIVKHCVPILGGVLVGLCMGMISGLIFAEAFGIDHDLLLSILPKSITTPVAIQIAAGLGGVPSMTVVFVMIAGFSGVILGPLFLKWLRIRSSLGQGIALGSASHALGTSKALEYGELAVSMSSVSMTLCAVLGSFFGPLVVWLFHI.

A run of 6 helical transmembrane segments spans residues 4 to 24 (ACIAIIIILLTVAAYLAMVKL), 30 to 50 (LPFLIPVLTTTILIVAALMMF), 67 to 87 (LLGPAVVALAYPLYKQWHIIV), 91 to 111 (VPILGGVLVGLCMGMISGLIF), 148 to 168 (MTVVFVMIAGFSGVILGPLFL), and 210 to 230 (MTLCAVLGSFFGPLVVWLFHI).

Belongs to the YohK (E.coli)/YwbG (IPA-22R) (B.subtilis) family.

The protein resides in the cell membrane. This is an uncharacterized protein from Bacillus subtilis (strain 168).